Here is a 351-residue protein sequence, read N- to C-terminus: MSDPVFIAPKGGLTLGSVAEACGVPLPDGADPSQPVTGAAPLETAGPSELAYMDNARYGDALATTRALACLVSPRFAPRVPAGTIALVTRDPYRAYAGLLARLYEEAMRPGSLFAAAGVSPGAHVHPQARLEDGVRIDPGAVVGPGAEIGAGTVLGPNAVIGPNVRIGRDCSIGAGTTLTHALVGNRVIVHPGARIGQDGFGFAMGAGGHIKVPQVGRVIIQDDVEIGANTTIDRGASRDTVVGEGTKIDNLVQIAHNVVIGRHCVIVSGVGISGSTTLEDYVVLGGQVGVVGHLRIGMGSQIAGSSNVNRDVPPGSRWGGTPAKPVRTWFREMTTLARLAERSGKDEAEG.

His257 (proton acceptor) is an active-site residue.

It belongs to the transferase hexapeptide repeat family. LpxD subfamily. As to quaternary structure, homotrimer.

It carries out the reaction a UDP-3-O-[(3R)-3-hydroxyacyl]-alpha-D-glucosamine + a (3R)-hydroxyacyl-[ACP] = a UDP-2-N,3-O-bis[(3R)-3-hydroxyacyl]-alpha-D-glucosamine + holo-[ACP] + H(+). The protein operates within bacterial outer membrane biogenesis; LPS lipid A biosynthesis. Its function is as follows. Catalyzes the N-acylation of UDP-3-O-acylglucosamine using 3-hydroxyacyl-ACP as the acyl donor. Is involved in the biosynthesis of lipid A, a phosphorylated glycolipid that anchors the lipopolysaccharide to the outer membrane of the cell. The polypeptide is UDP-3-O-acylglucosamine N-acyltransferase (Methylorubrum extorquens (strain CM4 / NCIMB 13688) (Methylobacterium extorquens)).